A 61-amino-acid polypeptide reads, in one-letter code: Large ribosomal subunit protein uL30 (61 aa).

The protein belongs to the universal ribosomal protein uL30 family. In terms of assembly, part of the 50S ribosomal subunit.

The chain is Large ribosomal subunit protein uL30 from Treponema denticola (strain ATCC 35405 / DSM 14222 / CIP 103919 / JCM 8153 / KCTC 15104).